Here is a 328-residue protein sequence, read N- to C-terminus: Aryl-hydrocarbon-interacting protein-like 1 (328 aa).

Residues 53 to 145 (KQVGHPMHII…DLDELQKEPQ (93 aa)) form the PPIase FKBP-type domain. TPR repeat units lie at residues 178 to 211 (VPILHGEGNRLFKLGRYEEASNKYQEAIVCLRNL), 230 to 263 (NTLILNYCQCLLKKEEYYEVLEHTSDILRHHPGI), and 264 to 297 (VKAYYVRARAHAEVWNEAEAKADLEKVLELEPSM).

In terms of assembly, directly interacts with NUB1.

It is found in the cytoplasm. The protein resides in the nucleus. Its function is as follows. May be important in protein trafficking and/or protein folding and stabilization. The sequence is that of Aryl-hydrocarbon-interacting protein-like 1 (AIPL1) from Bos taurus (Bovine).